We begin with the raw amino-acid sequence, 320 residues long: MEMNIKFPVIDLSKLNGEERDQTMALIDDACQNWGFFELVNHGLPYDLMDNIERMTKEHYKKHMEQKFKEMLRSKGLDTLETEVEDVDWESTFYLHHLPQSNLYDIPDMSNEYRLAMKDFGKRLEILAEELLDLLCENLGLEKGYLKKVFHGTTGPTFATKLSNYPPCPKPEMIKGLRAHTDAGGLILLFQDDKVSGLQLLKDGDWVDVPPLKHSIVINLGDQLEVITNGKYKSVMHRVMTQKEGNRMSIASFYNPGSDAEISPATSLVDKDSKYPSFVFDDYMKLYAGLKFQAKEPRFEAMKNAEAAADLNPVAVVETF.

Residues 111-131 (NEYRLAMKDFGKRLEILAEEL) adopt a coiled-coil conformation. Positions 155 to 256 (GPTFATKLSN…RMSIASFYNP (102 aa)) constitute a Fe2OG dioxygenase domain. Fe cation-binding residues include histidine 180, aspartate 182, and histidine 237. Arginine 247 contacts 2-oxoglutarate.

This sequence belongs to the iron/ascorbate-dependent oxidoreductase family. Fe(2+) serves as cofactor.

It carries out the reaction 1-aminocyclopropane-1-carboxylate + L-ascorbate + O2 = ethene + L-dehydroascorbate + hydrogen cyanide + CO2 + 2 H2O. It functions in the pathway alkene biosynthesis; ethylene biosynthesis via S-adenosyl-L-methionine; ethylene from S-adenosyl-L-methionine: step 2/2. Enzyme involved in the ethylene biosynthesis. May promote stem elongation by maximizing the extensibility cells, possibly by activating ethylene biosynthesis, in response to very-long-chain fatty acids (VLCFAs C20:0 to C30:0). The chain is 1-aminocyclopropane-1-carboxylate oxidase 3 from Arabidopsis thaliana (Mouse-ear cress).